Consider the following 127-residue polypeptide: Translation initiation factor 5A (127 aa).

Hypusine is present on Lys35.

This sequence belongs to the eIF-5A family.

It localises to the cytoplasm. In terms of biological role, functions by promoting the formation of the first peptide bond. The protein is Translation initiation factor 5A of Methanococcoides burtonii (strain DSM 6242 / NBRC 107633 / OCM 468 / ACE-M).